Consider the following 158-residue polypeptide: Endoribonuclease YbeY (158 aa).

Zn(2+) contacts are provided by histidine 120, histidine 124, and histidine 130.

It belongs to the endoribonuclease YbeY family. It depends on Zn(2+) as a cofactor.

It localises to the cytoplasm. Its function is as follows. Single strand-specific metallo-endoribonuclease involved in late-stage 70S ribosome quality control and in maturation of the 3' terminus of the 16S rRNA. The polypeptide is Endoribonuclease YbeY (Spiroplasma citri).